Reading from the N-terminus, the 777-residue chain is B3 domain-containing protein REM-like 1 (777 aa).

Positions 97 to 193 (FVTFTLAPVD…TPVLSLCFEE (97 aa)) form a DNA-binding region, TF-B3 1. Disordered stretches follow at residues 200–248 (VGEE…TSPS) and 344–391 (KSSS…ESSS). Basic and acidic residues predominate over residues 218–243 (KIVKDDNNKDESSTWKREGNHLRCKD). The TF-B3 2 DNA-binding region spans 252-347 (TLTVTITPDS…TPVLSIKSSS (96 aa)). Over residues 344-368 (KSSSGKGQSEFSKESLSIKPSSGNM) the composition is skewed to polar residues. The segment covering 370–388 (KKVENNREASRKYPPRSRE) has biased composition (basic and acidic residues). 2 consecutive DNA-binding regions (TF-B3) follow at residues 582-676 (FLTL…RDSS) and 683-777 (FLTL…FYTK).

The protein localises to the nucleus. The protein is B3 domain-containing protein REM-like 1 of Arabidopsis thaliana (Mouse-ear cress).